We begin with the raw amino-acid sequence, 87 residues long: Neurotoxin Cex1 (87 aa).

Residues 1 to 19 (MNSLLMITTCLVLFGTVWA) form the signal peptide. The 66-residue stretch at 20–85 (KEGYLVSKST…TYPIPGKSCG (66 aa)) folds into the LCN-type CS-alpha/beta domain. 4 disulfide bridges follow: Cys31–Cys84, Cys35–Cys60, Cys44–Cys65, and Cys48–Cys67. Cys84 bears the Cysteine amide mark. Residues 85 to 87 (GKK) constitute a propeptide that is removed on maturation.

This sequence belongs to the long (4 C-C) scorpion toxin superfamily. Sodium channel inhibitor family. Beta subfamily. As to expression, expressed by the venom gland.

The protein resides in the secreted. Functionally, beta toxins bind voltage-independently at site-4 of sodium channels (Nav) and shift the voltage of activation toward more negative potentials thereby affecting sodium channel activation and promoting spontaneous and repetitive firing. The polypeptide is Neurotoxin Cex1 (Centruroides exilicauda (Bark scorpion)).